Consider the following 333-residue polypeptide: Biotin synthase (333 aa).

One can recognise a Radical SAM core domain in the interval 46–275; that stretch reads YYGKKVKLNM…TKEIRISGGR (230 aa). [4Fe-4S] cluster-binding residues include Cys64, Cys68, and Cys71. Residues Cys108, Cys140, Cys200, and Arg270 each coordinate [2Fe-2S] cluster.

It belongs to the radical SAM superfamily. Biotin synthase family. As to quaternary structure, homodimer. [4Fe-4S] cluster serves as cofactor. [2Fe-2S] cluster is required as a cofactor.

The enzyme catalyses (4R,5S)-dethiobiotin + (sulfur carrier)-SH + 2 reduced [2Fe-2S]-[ferredoxin] + 2 S-adenosyl-L-methionine = (sulfur carrier)-H + biotin + 2 5'-deoxyadenosine + 2 L-methionine + 2 oxidized [2Fe-2S]-[ferredoxin]. The protein operates within cofactor biosynthesis; biotin biosynthesis; biotin from 7,8-diaminononanoate: step 2/2. Functionally, catalyzes the conversion of dethiobiotin (DTB) to biotin by the insertion of a sulfur atom into dethiobiotin via a radical-based mechanism. The protein is Biotin synthase of Halalkalibacterium halodurans (strain ATCC BAA-125 / DSM 18197 / FERM 7344 / JCM 9153 / C-125) (Bacillus halodurans).